An 82-amino-acid chain; its full sequence is MKLLLLALIQFYRRWISPLTPASCRFYPTCSQYGLEAIDRFGPLKGSWLTLCRILRCHPFHPGGYDPVPPLPSCSCGKSPCD.

This sequence belongs to the UPF0161 family.

The protein localises to the cell inner membrane. Its function is as follows. Could be involved in insertion of integral membrane proteins into the membrane. This Synechococcus elongatus (strain ATCC 33912 / PCC 7942 / FACHB-805) (Anacystis nidulans R2) protein is Putative membrane protein insertion efficiency factor.